A 264-amino-acid polypeptide reads, in one-letter code: Thymidylate synthase (264 aa).

Arg-21 lines the dUMP pocket. A (6R)-5,10-methylene-5,6,7,8-tetrahydrofolate-binding site is contributed by His-51. Residue 126–127 (RR) coordinates dUMP. Catalysis depends on Cys-146, which acts as the Nucleophile. DUMP contacts are provided by residues 166–169 (RSAD), Asn-177, and 207–209 (HIY). Asp-169 contributes to the (6R)-5,10-methylene-5,6,7,8-tetrahydrofolate binding site. Position 263 (Ala-263) interacts with (6R)-5,10-methylene-5,6,7,8-tetrahydrofolate.

The protein belongs to the thymidylate synthase family. Bacterial-type ThyA subfamily. Homodimer.

The protein localises to the cytoplasm. It carries out the reaction dUMP + (6R)-5,10-methylene-5,6,7,8-tetrahydrofolate = 7,8-dihydrofolate + dTMP. It participates in pyrimidine metabolism; dTTP biosynthesis. Its function is as follows. Catalyzes the reductive methylation of 2'-deoxyuridine-5'-monophosphate (dUMP) to 2'-deoxythymidine-5'-monophosphate (dTMP) while utilizing 5,10-methylenetetrahydrofolate (mTHF) as the methyl donor and reductant in the reaction, yielding dihydrofolate (DHF) as a by-product. This enzymatic reaction provides an intracellular de novo source of dTMP, an essential precursor for DNA biosynthesis. The sequence is that of Thymidylate synthase from Methylobacillus flagellatus (strain ATCC 51484 / DSM 6875 / VKM B-1610 / KT).